A 191-amino-acid chain; its full sequence is Molybdenum cofactor guanylyltransferase (191 aa).

Residues 11–13 (LCG), Lys23, Asp66, and Asp97 contribute to the GTP site. Residue Asp97 participates in Mg(2+) binding.

The protein belongs to the MobA family. As to quaternary structure, monomer. It depends on Mg(2+) as a cofactor.

It localises to the cytoplasm. The enzyme catalyses Mo-molybdopterin + GTP + H(+) = Mo-molybdopterin guanine dinucleotide + diphosphate. Its function is as follows. Transfers a GMP moiety from GTP to Mo-molybdopterin (Mo-MPT) cofactor (Moco or molybdenum cofactor) to form Mo-molybdopterin guanine dinucleotide (Mo-MGD) cofactor. This is Molybdenum cofactor guanylyltransferase from Campylobacter jejuni subsp. jejuni serotype O:2 (strain ATCC 700819 / NCTC 11168).